The following is a 372-amino-acid chain: NAD(P)H-quinone oxidoreductase subunit 1, chloroplastic (372 aa).

Helical transmembrane passes span 28–48, 65–85, 97–117, 128–148, 166–186, 254–274, 312–332, and 352–372; these read IWICIPILVVVLGSTLGVLVI, PEYAGPLGIIQALIDGLKLIL, WLFTLGPAIVVIPIVLSYLVV, IGIGIFFWIAISSVAPMGLLI, AAQAISYEIPLALCVLAIILM, FGLFYVASYINLLVSALFVSV, GIIGLGITLVKAYIFLFLAVL, and FLLPVCLGNLLLTASFQITLL.

It belongs to the complex I subunit 1 family. In terms of assembly, NDH is composed of at least 16 different subunits, 5 of which are encoded in the nucleus.

The protein localises to the plastid. Its subcellular location is the chloroplast thylakoid membrane. The enzyme catalyses a plastoquinone + NADH + (n+1) H(+)(in) = a plastoquinol + NAD(+) + n H(+)(out). It carries out the reaction a plastoquinone + NADPH + (n+1) H(+)(in) = a plastoquinol + NADP(+) + n H(+)(out). Functionally, NDH shuttles electrons from NAD(P)H:plastoquinone, via FMN and iron-sulfur (Fe-S) centers, to quinones in the photosynthetic chain and possibly in a chloroplast respiratory chain. The immediate electron acceptor for the enzyme in this species is believed to be plastoquinone. Couples the redox reaction to proton translocation, and thus conserves the redox energy in a proton gradient. This Staurastrum punctulatum (Green alga) protein is NAD(P)H-quinone oxidoreductase subunit 1, chloroplastic.